The primary structure comprises 239 residues: MKLTVLALAAMMGVGGMAASVQAAEVPEGPHVVTSGTASVDAVPDMATLTFQVNASAKDAAVAKSQVDQRVAKYFDFLKRNGIDPQDISAANLYTMPEYEYQKDGKSQLKGYRAVRTVQVTLRQLDKLNSLLDGALKANLNEIRSVELGVAKPEVYRDKARQMAIRNAISQAESLAQGFGVTLGPVYSVRYHVSNFQPEPETRMYAAAPSANQTSAAQTYEQQTIHFDDRVEVVFNLSK.

This is an uncharacterized protein from Edwardsiella ictaluri (strain 93-146).